A 339-amino-acid chain; its full sequence is DNA-directed RNA polymerase subunit alpha (339 aa).

Residues 1 to 233 (MVREKVRIST…DLFIPFLHAE (233 aa)) form an alpha N-terminal domain (alpha-NTD) region. Residues 267 to 339 (IALKSIFIDQ…FTINLPKNKF (73 aa)) are alpha C-terminal domain (alpha-CTD).

The protein belongs to the RNA polymerase alpha chain family. As to quaternary structure, in plastids the minimal PEP RNA polymerase catalytic core is composed of four subunits: alpha, beta, beta', and beta''. When a (nuclear-encoded) sigma factor is associated with the core the holoenzyme is formed, which can initiate transcription.

It localises to the plastid. The protein localises to the chloroplast. It catalyses the reaction RNA(n) + a ribonucleoside 5'-triphosphate = RNA(n+1) + diphosphate. Functionally, DNA-dependent RNA polymerase catalyzes the transcription of DNA into RNA using the four ribonucleoside triphosphates as substrates. The polypeptide is DNA-directed RNA polymerase subunit alpha (Populus trichocarpa (Western balsam poplar)).